We begin with the raw amino-acid sequence, 197 residues long: Protocatechuate 3,4-dioxygenase alpha chain (197 aa).

Arg-130 provides a ligand contact to 3,4-dihydroxybenzoate.

It belongs to the intradiol ring-cleavage dioxygenase family. In terms of assembly, the enzyme is an oligomer of 12 copies of the alpha and beta chains. Fe(3+) serves as cofactor.

It carries out the reaction 3,4-dihydroxybenzoate + O2 = 3-carboxy-cis,cis-muconate + 2 H(+). The protein operates within aromatic compound metabolism; beta-ketoadipate pathway; 3-carboxy-cis,cis-muconate from 3,4-dihydroxybenzoate: step 1/1. In terms of biological role, plays an essential role in the utilization of numerous aromatic and hydroaromatic compounds via the beta-ketoadipate pathway. The sequence is that of Protocatechuate 3,4-dioxygenase alpha chain (pcaG) from Burkholderia cepacia (Pseudomonas cepacia).